Here is a 743-residue protein sequence, read N- to C-terminus: Inhibitor of nuclear factor kappa-B kinase subunit alpha (743 aa).

The Protein kinase domain maps to 15 to 300 (WDMKDRLGTG…MDCGRPQCFV (286 aa)). ATP contacts are provided by residues 21–29 (LGTGGFGNV) and Lys-44. The active-site Proton acceptor is the Asp-144. The leucine-zipper stretch occupies residues 453 to 474 (LLRFNTNLTKMKNTMVSASQQL). An NEMO-binding region spans residues 736-741 (LDFSWL).

The protein belongs to the protein kinase superfamily. Ser/Thr protein kinase family. I-kappa-B kinase subfamily.

Its subcellular location is the cytoplasm. It is found in the nucleus. It carries out the reaction L-seryl-[I-kappa-B protein] + ATP = O-phospho-L-seryl-[I-kappa-B protein] + ADP + H(+). Its activity is regulated as follows. Activated when phosphorylated and inactivated when dephosphorylated. Its function is as follows. Phosphorylates inhibitors of NF-kappa-B thus leading to the dissociation of the inhibitor/NF-kappa-B complex and ultimately the degradation of the inhibitor. Phosphorylates 'Ser-10' of histone H3 at NF-kappa-B-regulated promoters during inflammatory responses triggered by cytokines. The polypeptide is Inhibitor of nuclear factor kappa-B kinase subunit alpha (chuk) (Xenopus tropicalis (Western clawed frog)).